The primary structure comprises 346 residues: Methionine import ATP-binding protein MetN 1 (346 aa).

The ABC transporter domain maps to I2–V241. G38–S45 contacts ATP.

The protein belongs to the ABC transporter superfamily. Methionine importer (TC 3.A.1.24) family. In terms of assembly, the complex is composed of two ATP-binding proteins (MetN), two transmembrane proteins (MetI) and a solute-binding protein (MetQ).

Its subcellular location is the cell membrane. The catalysed reaction is L-methionine(out) + ATP + H2O = L-methionine(in) + ADP + phosphate + H(+). It catalyses the reaction D-methionine(out) + ATP + H2O = D-methionine(in) + ADP + phosphate + H(+). In terms of biological role, part of the ABC transporter complex MetNIQ involved in methionine import. Responsible for energy coupling to the transport system. This is Methionine import ATP-binding protein MetN 1 from Bacillus cereus (strain ZK / E33L).